Here is a 367-residue protein sequence, read N- to C-terminus: Flagellar P-ring protein (367 aa).

Residues 1–22 (MRRMLVIRWILAIHLIATQVFA) form the signal peptide.

This sequence belongs to the FlgI family. In terms of assembly, the basal body constitutes a major portion of the flagellar organelle and consists of four rings (L,P,S, and M) mounted on a central rod.

The protein resides in the periplasm. The protein localises to the bacterial flagellum basal body. Assembles around the rod to form the L-ring and probably protects the motor/basal body from shearing forces during rotation. This chain is Flagellar P-ring protein, found in Legionella pneumophila subsp. pneumophila (strain Philadelphia 1 / ATCC 33152 / DSM 7513).